The sequence spans 335 residues: UDP-3-O-acylglucosamine N-acyltransferase (335 aa).

The active-site Proton acceptor is H225.

This sequence belongs to the transferase hexapeptide repeat family. LpxD subfamily. Homotrimer.

It catalyses the reaction a UDP-3-O-[(3R)-3-hydroxyacyl]-alpha-D-glucosamine + a (3R)-hydroxyacyl-[ACP] = a UDP-2-N,3-O-bis[(3R)-3-hydroxyacyl]-alpha-D-glucosamine + holo-[ACP] + H(+). It participates in bacterial outer membrane biogenesis; LPS lipid A biosynthesis. In terms of biological role, catalyzes the N-acylation of UDP-3-O-acylglucosamine using 3-hydroxyacyl-ACP as the acyl donor. Is involved in the biosynthesis of lipid A, a phosphorylated glycolipid that anchors the lipopolysaccharide to the outer membrane of the cell. The protein is UDP-3-O-acylglucosamine N-acyltransferase of Delftia acidovorans (strain DSM 14801 / SPH-1).